The following is a 1200-amino-acid chain: SR-related and CTD-associated factor 4 (1200 aa).

Residues 1 to 139 (MDAVNAFNQE…PLLDMAAGTS (139 aa)) enclose the CID domain. K49 carries the post-translational modification N6-acetyllysine. Polar residues predominate over residues 140-153 (NAAPGAENVTNNEG). Disordered regions lie at residues 140-172 (NAAP…PTNS), 299-324 (VPAS…MQQP), and 346-566 (SMQH…QIKS). A Phosphoserine modification is found at S154. 2 stretches are compositionally biased toward pro residues: residues 367–390 (APPP…PGMP) and 399–461 (LPQP…PPVQ). A compositionally biased stretch (low complexity) spans 462-471 (PTFQPTFQPQ). Residues 493 to 503 (EVKRHVPESRK) show a composition bias toward basic and acidic residues. A compositionally biased stretch (basic residues) spans 504-541 (SRSRSPKRRRSRSGSRSRRSRHRRSRSRSRDRRRHSPR). The segment covering 543 to 558 (RSQERRDREKERERRQ) has biased composition (basic and acidic residues). Residues 574–648 (TTLWVGQLDK…KSIKIAWALN (75 aa)) form the RRM domain. Disordered stretches follow at residues 696-724 (WKGI…VSPI), 834-875 (VSGA…SLLG), and 927-1200 (PPHM…EAPR). S722 carries the phosphoserine modification. Composition is skewed to pro residues over residues 856-868 (PAAP…PPVT) and 927-958 (PPHM…PPHG). The span at 965-978 (GMPGLGGPGPGPGG) shows a compositional bias: gly residues. The span at 986–1036 (QQQPQQQQQQQQQQQQQQQQQQQQPPPQQSQTQQQPAPSQQPAPAQQQPQQ) shows a compositional bias: low complexity. Position 1058 is a phosphoserine (S1058). Over residues 1063-1139 (VENDRERYGS…RGKEKHEVAD (77 aa)) the composition is skewed to basic and acidic residues. Over residues 1153–1162 (QVGNTDTVSE) the composition is skewed to polar residues. S1178 bears the Phosphoserine mark.

Interacts with POLR2A; via C-terminal heptapeptide repeat domain (CTD) phosphorylated at 'Ser-2' and 'Ser-5'.

Its subcellular location is the nucleus. Its function is as follows. Anti-terminator protein required to prevent early mRNA termination during transcription. Together with SCAF8, acts by suppressing the use of early, alternative poly(A) sites, thereby preventing the accumulation of non-functional truncated proteins. Mechanistically, associates with the phosphorylated C-terminal heptapeptide repeat domain (CTD) of the largest RNA polymerase II subunit (POLR2A), and subsequently binds nascent RNA upstream of early polyadenylation sites to prevent premature mRNA transcript cleavage and polyadenylation. Independently of SCAF8, also acts as a suppressor of transcriptional readthrough. In Rattus norvegicus (Rat), this protein is SR-related and CTD-associated factor 4.